The following is an 86-amino-acid chain: Anti-adapter protein IraP (86 aa).

Residues 1–36 (MKNLIAELLLKLAQKEEESKELCAQVEALEIIVTAM) adopt a coiled-coil conformation.

The protein belongs to the IraP family. Interacts with RssB.

Its subcellular location is the cytoplasm. Its function is as follows. Inhibits RpoS proteolysis by regulating RssB activity, thereby increasing the stability of the sigma stress factor RpoS especially during phosphate starvation, but also in stationary phase and during nitrogen starvation. Its effect on RpoS stability is due to its interaction with RssB, which probably blocks the interaction of RssB with RpoS, and the consequent delivery of the RssB-RpoS complex to the ClpXP protein degradation pathway. This is Anti-adapter protein IraP from Shigella boydii serotype 18 (strain CDC 3083-94 / BS512).